The following is an 81-amino-acid chain: UPF0248 protein TK0315 (81 aa).

This sequence belongs to the UPF0248 family.

The sequence is that of UPF0248 protein TK0315 from Thermococcus kodakarensis (strain ATCC BAA-918 / JCM 12380 / KOD1) (Pyrococcus kodakaraensis (strain KOD1)).